The following is a 480-amino-acid chain: Protein nucleotidyltransferase YdiU (480 aa).

Gly-86, Gly-88, Arg-89, Lys-109, Asp-121, Gly-122, Arg-172, and Arg-179 together coordinate ATP. The active-site Proton acceptor is the Asp-248. Mg(2+)-binding residues include Asn-249 and Asp-258. Asp-258 is an ATP binding site.

Belongs to the SELO family. Requires Mg(2+) as cofactor. The cofactor is Mn(2+).

The catalysed reaction is L-seryl-[protein] + ATP = 3-O-(5'-adenylyl)-L-seryl-[protein] + diphosphate. It catalyses the reaction L-threonyl-[protein] + ATP = 3-O-(5'-adenylyl)-L-threonyl-[protein] + diphosphate. The enzyme catalyses L-tyrosyl-[protein] + ATP = O-(5'-adenylyl)-L-tyrosyl-[protein] + diphosphate. It carries out the reaction L-histidyl-[protein] + UTP = N(tele)-(5'-uridylyl)-L-histidyl-[protein] + diphosphate. The catalysed reaction is L-seryl-[protein] + UTP = O-(5'-uridylyl)-L-seryl-[protein] + diphosphate. It catalyses the reaction L-tyrosyl-[protein] + UTP = O-(5'-uridylyl)-L-tyrosyl-[protein] + diphosphate. In terms of biological role, nucleotidyltransferase involved in the post-translational modification of proteins. It can catalyze the addition of adenosine monophosphate (AMP) or uridine monophosphate (UMP) to a protein, resulting in modifications known as AMPylation and UMPylation. The sequence is that of Protein nucleotidyltransferase YdiU from Salmonella schwarzengrund (strain CVM19633).